The chain runs to 351 residues: DNA nickase (351 aa).

Positions 241, 245, and 303 each coordinate Fe cation.

Functionally, acts as a DNA nickase. This is DNA nickase from Nostoc sp. (strain PCC 7120 / SAG 25.82 / UTEX 2576).